Reading from the N-terminus, the 41-residue chain is uncharacterized protein (41 aa).

The protein resides in the plastid. It is found in the chloroplast. This is an uncharacterized protein from Trieres chinensis (Marine centric diatom).